Here is a 570-residue protein sequence, read N- to C-terminus: Methyl-coenzyme M reductase subunit alpha (570 aa).

A coenzyme F430-binding site is contributed by Gln-161. Coenzyme B is bound by residues Arg-239, 270 to 271, and Arg-284; that span reads KH. His-271 carries the pros-methylhistidine modification. At Arg-285 the chain carries 5-methylarginine. Coenzyme M is bound by residues Tyr-346 and Phe-464. A 1-thioglycine modification is found at Gly-465. Asp-470 is subject to (Z)-2,3-didehydroaspartate. Cys-472 is subject to S-methylcysteine.

Belongs to the methyl-coenzyme M reductase alpha subunit family. MCR is a hexamer of two alpha, two beta, and two gamma chains, forming a dimer of heterotrimers. Coenzyme F430 is required as a cofactor. In terms of processing, the alpha subunit contains five modified amino acids near the active site region. Is methylated on His-271, Arg-285 and Cys-472, probably by the action of specific S-adenosylmethionine-dependent methyltransferases. Also contains a thioglycine at position 465, forming a thiopeptide bond. Contains a didehydroaspartate residue at position 470. The methylation on C5 of Arg-285 is a post-translational methylation not essential in vivo, but which plays a role for the stability and structural integrity of MCR. Does not show a methylation at Gln-420, as shown for M.marburgensis.

The protein resides in the cytoplasm. The enzyme catalyses coenzyme B + methyl-coenzyme M = methane + coenzyme M-coenzyme B heterodisulfide. The protein operates within one-carbon metabolism; methyl-coenzyme M reduction; methane from methyl-coenzyme M: step 1/1. Component of the methyl-coenzyme M reductase (MCR) I that catalyzes the reductive cleavage of methyl-coenzyme M (CoM-S-CH3 or 2-(methylthio)ethanesulfonate) using coenzyme B (CoB or 7-mercaptoheptanoylthreonine phosphate) as reductant which results in the production of methane and the mixed heterodisulfide of CoB and CoM (CoM-S-S-CoB). This is the final step in methanogenesis. This chain is Methyl-coenzyme M reductase subunit alpha (mcrA), found in Methanosarcina barkeri (strain Fusaro / DSM 804).